A 156-amino-acid chain; its full sequence is SsrA-binding protein (156 aa).

Belongs to the SmpB family.

It localises to the cytoplasm. Functionally, required for rescue of stalled ribosomes mediated by trans-translation. Binds to transfer-messenger RNA (tmRNA), required for stable association of tmRNA with ribosomes. tmRNA and SmpB together mimic tRNA shape, replacing the anticodon stem-loop with SmpB. tmRNA is encoded by the ssrA gene; the 2 termini fold to resemble tRNA(Ala) and it encodes a 'tag peptide', a short internal open reading frame. During trans-translation Ala-aminoacylated tmRNA acts like a tRNA, entering the A-site of stalled ribosomes, displacing the stalled mRNA. The ribosome then switches to translate the ORF on the tmRNA; the nascent peptide is terminated with the 'tag peptide' encoded by the tmRNA and targeted for degradation. The ribosome is freed to recommence translation, which seems to be the essential function of trans-translation. The polypeptide is SsrA-binding protein (Renibacterium salmoninarum (strain ATCC 33209 / DSM 20767 / JCM 11484 / NBRC 15589 / NCIMB 2235)).